The primary structure comprises 169 residues: Actin-related protein 2/3 complex subunit 4 (169 aa).

Belongs to the ARPC4 family. In terms of assembly, component of the Arp2/3 complex composed of arpB/Arp2, arpC/Arp3, arcA/p41-arc, arcB/p34-arc, arcC/p21-arc, arcD/p20-arc and arcE/p16-arc. Interacts with carmil (via the region between the LRR domain and COOH-terminal proline-rich domain); carmil is required for Arp2/3-dependent actin nucleation. Arp2/3 complex, MyoB, MyoC, and the alpha and beta subunits of capping protein all form a larger complex with carmil.

The protein localises to the cytoplasm. The protein resides in the cytoskeleton. It is found in the cytosol. Its subcellular location is the cell cortex. It localises to the cell projection. The protein localises to the pseudopodium. Functions as a component of the Arp2/3 complex which is involved in regulation of actin polymerization and together with an activating nucleation-promoting factor (NPF) mediates the formation of branched actin networks. Seems to contact the pointed end of the daughter actin filament. The Arp2/3 complex is involved in organizing the actin system in cell motility and chemotaxis, in phagocytosis and macropinocytosis, at late steps of endosome processing, and in mitosis. In concert with a group of other proteins, the Arp2/3 complex plays a general role in the rapid activation and adaptation of the actin system to its multiple functions. The protein is Actin-related protein 2/3 complex subunit 4 (arcD) of Dictyostelium discoideum (Social amoeba).